Consider the following 456-residue polypeptide: Chromosomal replication initiator protein DnaA (456 aa).

Residues 1-79 form a domain I, interacts with DnaA modulators region; the sequence is MSQEIWADVL…QHPQVSFQVL (79 aa). Positions 79-112 are domain II; it reads LPASQDALLLPSDPPPAPISPGRAPAPPPADNRK. A disordered region spans residues 89-112; that stretch reads PSDPPPAPISPGRAPAPPPADNRK. Residues 90–108 are compositionally biased toward pro residues; sequence SDPPPAPISPGRAPAPPPA. Residues 113–329 form a domain III, AAA+ region region; the sequence is TLNPKYTFEN…GALMRVVAFS (217 aa). The ATP site is built by G157, G159, K160, and T161. The domain IV, binds dsDNA stretch occupies residues 330–456; it reads SLNNVPFSRA…KGLEDEDSRA (127 aa).

Belongs to the DnaA family. As to quaternary structure, oligomerizes as a right-handed, spiral filament on DNA at oriC.

The protein resides in the cytoplasm. Plays an essential role in the initiation and regulation of chromosomal replication. ATP-DnaA binds to the origin of replication (oriC) to initiate formation of the DNA replication initiation complex once per cell cycle. Binds the DnaA box (a 9 base pair repeat at the origin) and separates the double-stranded (ds)DNA. Forms a right-handed helical filament on oriC DNA; dsDNA binds to the exterior of the filament while single-stranded (ss)DNA is stabiized in the filament's interior. The ATP-DnaA-oriC complex binds and stabilizes one strand of the AT-rich DNA unwinding element (DUE), permitting loading of DNA polymerase. After initiation quickly degrades to an ADP-DnaA complex that is not apt for DNA replication. Binds acidic phospholipids. This Deinococcus deserti (strain DSM 17065 / CIP 109153 / LMG 22923 / VCD115) protein is Chromosomal replication initiator protein DnaA.